The sequence spans 427 residues: Enolase 2 (427 aa).

Residue glutamine 165 participates in (2R)-2-phosphoglycerate binding. Glutamate 207 (proton donor) is an active-site residue. Mg(2+) is bound by residues aspartate 244, glutamate 287, and aspartate 314. (2R)-2-phosphoglycerate is bound by residues lysine 339, arginine 368, serine 369, and lysine 390. Catalysis depends on lysine 339, which acts as the Proton acceptor.

The protein belongs to the enolase family. Component of the RNA degradosome, a multiprotein complex involved in RNA processing and mRNA degradation. Mg(2+) serves as cofactor.

Its subcellular location is the cytoplasm. It is found in the secreted. The protein localises to the cell surface. It catalyses the reaction (2R)-2-phosphoglycerate = phosphoenolpyruvate + H2O. Its pathway is carbohydrate degradation; glycolysis; pyruvate from D-glyceraldehyde 3-phosphate: step 4/5. Functionally, catalyzes the reversible conversion of 2-phosphoglycerate (2-PG) into phosphoenolpyruvate (PEP). It is essential for the degradation of carbohydrates via glycolysis. The polypeptide is Enolase 2 (Pseudomonas syringae pv. tomato (strain ATCC BAA-871 / DC3000)).